The sequence spans 1015 residues: Cytosolic carboxypeptidase 1 (1015 aa).

Positions 384–462 (LPTATPSTPG…GALPKTTRLN (79 aa)) are disordered. Residues 416–451 (EDGMDEEDEAFVRDDDDEGKDDRGSDDDDGKDDDEI) are compositionally biased toward acidic residues. One can recognise a Peptidase M14 domain in the interval 727-1013 (YPYTYSFLNS…DLLHSFLEMT (287 aa)). 3 residues coordinate Zn(2+): histidine 792, glutamate 795, and histidine 891. The active-site Proton donor/acceptor is glutamate 977.

This sequence belongs to the peptidase M14 family. Requires Zn(2+) as cofactor. In hermaphrodites and males, expressed in amphid and IL2 ciliated sensory neurons. In males, expressed in CEM head neurons, RnB and HOB tail neurons, and in gubernacular erector and retractor muscles.

Its subcellular location is the perikaryon. It is found in the cell projection. The protein resides in the cilium. The protein localises to the dendrite. Catalyzes the deglutamylation of polyglutamate side chains generated by post-translational polyglutamylation of proteins such as tubulins. Via the deglutamylation of tubulin, regulates the localization and velocity of kinesin motors and the structural integrity of microtubules in sensory cilia. In male CEM sensory neurons, regulates the cilia release of bioactive extracellular vesicles. Also regulates microtubule dynamics in uterine muscle cells. The protein is Cytosolic carboxypeptidase 1 of Caenorhabditis elegans.